The sequence spans 840 residues: MDESALLDLLECPVCLERLDASAKVLPCQHTFCKRCLLGIVGSRNELRCPECRTLVGSGVEQLPSNILLVRLLDGIKQRPWKPGPVGGSGTNGTSALRAQSSAVVTCSPKDGPSSQGGPQPRAQAWSPPVRGIPQLPCAKALYNYEGKEPGDLKFSKGDIIVLRRQVDENWYHGEVGGVHGFFPTNFVQIIKPLPQPPPQCKALYDFEVKDKEADKDCLPFAKDDVLTVIRRVDENWAEGMLADKIGIFPISYVEFNSAAKQLIEWDQPPGPGVAAGEGALATTPSSTTTKQPDGKKNTKKRHSFTSLSMASKASQAAQQRHSMEISPPVLISSSNPAAAARIGELAGLSCSAPSQVHISTTGLIVTPPPSSPVTTGPSFTFPAEAPYPAALATLNPPLPPPPLQAATPTGTAVAAAAGMGPRPTAGPTDQTTHPRPQPRPSVYVAIYPYTPRKEDELELRKGEMFLVFERCQDGWFKGTSMHTSKIGVFPGNYVAPVTRAVTSASQGKVPMLTTGPASRGGVLANPPSTGGPAQKPPGNGVAGGPGVPTAVVSAAHVQTSPQAKVLLHASGQMTVNQARSAARTVSAHSQERPTAAVTPIQVQSTPGQSHHPLVSPQPPAPLGPPAHAAASGLGRVGGPLACATAPASIPAASLEPEPSSRPATLLPGTPTSPDSGSAARPDKDGKKEKKGLLKLLSGASTKRKPRGSPPASPTLDAELGAELSCGPPGPPCACPGPCDGDTMAPGPQRRASSLDSAPVAPPPRQPCSSLGPAASEVRPAVCERHRVVVSYPPQSEAELELKEGDIVFVHKKREDGWFKGTLQRNGKTGLFPGSFVENI.

The RING-type zinc-finger motif lies at cysteine 12–arginine 53. Residues valine 105 to proline 129 are disordered. 2 SH3 domains span residues proline 134–proline 193 and glutamine 196–alanine 259. Disordered regions lie at residues aspartate 267–methionine 324, threonine 394–serine 442, glycine 516–glycine 545, glutamine 578–glycine 633, alanine 652–glutamate 723, and methionine 744–proline 773. Low complexity predominate over residues glycine 273 to alanine 282. Residues threonine 283 to glutamine 292 are compositionally biased toward polar residues. An interaction with RAC1 region spans residues glutamine 292–threonine 362. A Phosphoserine modification is found at serine 304. Low complexity-rich tracts occupy residues serine 307–glutamine 320 and glutamine 405–proline 424. Positions histidine 434–proline 537 are interaction with AKT2. Residues proline 439–arginine 500 form the SH3 3 domain. Residues serine 616–proline 625 are compositionally biased toward pro residues. Positions arginine 681–glycine 692 are enriched in basic and acidic residues. The residue at position 709 (serine 709) is a Phosphoserine. Residues alanine 781–isoleucine 840 form the SH3 4 domain.

It belongs to the SH3RF family. In terms of assembly, interacts with RAC1; in a GTP-dependent manner. Interacts with MAP3K10/MLK2 and MAP3K11/MLK3. Interacts with MAPK8IP; this interaction leads to the PJAC complex (POSH-JIP or SH3RF1/MAPK8IP apoptotic complex) with a 1:1 ratio. Interacts with SIAH1. Interacts with HERP1. Probably part of a signaling complex that may contain SH3RF1, MAPK8IP, DLK1, MAP2K4/MKK4, MAP2K7/MKK7, MAPK8/JNK1, MAPK9/JNK2, AKT1 and AKT2. Found in a complex with RAC2, MAP3K7/TAK1, MAP2K7/MKK7, MAPK8IP1/JIP1, MAPK8/JNK1 and MAPK9/JNK2. Found in a complex with RAC1, MAP3K11/MLK3, MAP2K7/MKK7, MAPK8IP1/JIP1 and MAPK8/JNK1. Interacts with SH3RF2. Post-translationally, phosphorylated at Ser-304 by AKT1 and AKT2. When phosphorylated, it has reduced ability to bind Rac. Autoubiquitinated. Ubiquitinated by SH3RF2, leading to proteasome-mediated degradation.

The protein resides in the cytoplasm. It is found in the perinuclear region. It localises to the cell projection. The protein localises to the lamellipodium. Its subcellular location is the golgi apparatus. The protein resides in the trans-Golgi network. It carries out the reaction S-ubiquitinyl-[E2 ubiquitin-conjugating enzyme]-L-cysteine + [acceptor protein]-L-lysine = [E2 ubiquitin-conjugating enzyme]-L-cysteine + N(6)-ubiquitinyl-[acceptor protein]-L-lysine.. Its pathway is protein modification; protein ubiquitination. Its function is as follows. Has E3 ubiquitin-protein ligase activity. In the absence of an external substrate, it can catalyze self-ubiquitination. Stimulates ubiquitination of potassium channel KCNJ1, enhancing it's dynamin-dependent and clathrin-independent endocytosis. Acts as a scaffold protein that coordinates with MAPK8IP1/JIP1 in organizing different components of the JNK pathway, including RAC1 or RAC2, MAP3K11/MLK3 or MAP3K7/TAK1, MAP2K7/MKK7, MAPK8/JNK1 and/or MAPK9/JNK2 into a functional multiprotein complex to ensure the effective activation of the JNK signaling pathway. Regulates the differentiation of CD4(+) and CD8(+) T-cells and promotes T-helper 1 (Th1) cell differentiation. Regulates the activation of MAPK8/JNK1 and MAPK9/JNK2 in CD4(+) T-cells and the activation of MAPK8/JNK1 in CD8(+) T-cells. Plays a crucial role in the migration of neocortical neurons in the developing brain. Controls proper cortical neuronal migration and the formation of proximal cytoplasmic dilation in the leading process (PCDLP) in migratory neocortical neurons by regulating the proper localization of activated RAC1 and F-actin assembly. In Bos taurus (Bovine), this protein is E3 ubiquitin-protein ligase SH3RF1 (SH3RF1).